A 291-amino-acid chain; its full sequence is Phosphatidylglycerol--prolipoprotein diacylglyceryl transferase (291 aa).

Helical transmembrane passes span 21 to 41, 60 to 80, 96 to 116, 130 to 150, 198 to 218, 225 to 245, and 260 to 280; these read VALHWYGLMYLVGFVFAMWLA, LLYAGFLGVFLGGRIGYVLFY, WDGGMSFHGGLIGVILVMIIF, FIAPLIPFGLGAGRLGNFING, SQLYELALEGVVLFIILNLFI, GAVSGLFLIGYGALRIIVEFF, and ISMGQILSIPMIIAGAIMMVW. An a 1,2-diacyl-sn-glycero-3-phospho-(1'-sn-glycerol)-binding site is contributed by Arg-143.

This sequence belongs to the Lgt family.

It is found in the cell inner membrane. It carries out the reaction L-cysteinyl-[prolipoprotein] + a 1,2-diacyl-sn-glycero-3-phospho-(1'-sn-glycerol) = an S-1,2-diacyl-sn-glyceryl-L-cysteinyl-[prolipoprotein] + sn-glycerol 1-phosphate + H(+). It functions in the pathway protein modification; lipoprotein biosynthesis (diacylglyceryl transfer). Functionally, catalyzes the transfer of the diacylglyceryl group from phosphatidylglycerol to the sulfhydryl group of the N-terminal cysteine of a prolipoprotein, the first step in the formation of mature lipoproteins. This is Phosphatidylglycerol--prolipoprotein diacylglyceryl transferase from Salmonella choleraesuis (strain SC-B67).